The sequence spans 635 residues: Chaperone protein HtpG (635 aa).

The a; substrate-binding stretch occupies residues 1-336 (MTTAEAAAPE…SADLPLNLSR (336 aa)). The tract at residues 337–556 (EMLQDSAILA…ESGIDRRLEK (220 aa)) is b. The interval 557-635 (LLASAGRLGD…RVMQRGLPTA (79 aa)) is c.

It belongs to the heat shock protein 90 family. As to quaternary structure, homodimer.

The protein localises to the cytoplasm. In terms of biological role, molecular chaperone. Has ATPase activity. This is Chaperone protein HtpG from Azorhizobium caulinodans (strain ATCC 43989 / DSM 5975 / JCM 20966 / LMG 6465 / NBRC 14845 / NCIMB 13405 / ORS 571).